The following is a 757-amino-acid chain: Chloride channel protein C (757 aa).

Topologically, residues 1–96 are cytoplasmic; it reads MGSSLNKPLS…LHLKKTFGKW (96 aa). 11 consecutive transmembrane segments (helical) span residues 97–117, 141–161, 196–216, 253–273, 292–312, 337–357, 378–398, 462–482, 484–504, 506–526, and 535–555; these read IICL…KMVV, FLTF…MVIV, IVSL…GPMI, FISI…IGGV, TFFT…GIGS, LLCF…FVFL, FEAL…SFIF, LLVF…LWVA, GLFV…GQTI, MWFT…AMMA, and IVVI…IILA. CBS domains follow at residues 600–667 and 710–757; these read MSKN…TGEE and MNSS…NDLF.

It belongs to the chloride channel (TC 2.A.49) family.

Its subcellular location is the membrane. Voltage-gated chloride channel. Chloride channels may have several functions including the regulation of cell volume, membrane potential stabilization and signal transduction. This chain is Chloride channel protein C (clcC), found in Dictyostelium discoideum (Social amoeba).